A 320-amino-acid polypeptide reads, in one-letter code: Adenosine receptor A3 (320 aa).

Residues 1-16 (MKANNTTTSALWLQIT) lie on the Extracellular side of the membrane. Asn-4 and Asn-5 each carry an N-linked (GlcNAc...) asparagine glycan. Residues 17–39 (YITMEAAIGLCAVVGNMLVIWVV) traverse the membrane as a helical segment. Residues 40–50 (KLNRTLRTTTF) are Cytoplasmic-facing. The helical transmembrane segment at 51–74 (YFIVSLALADIAVGVLVIPLAIAV) threads the bilayer. Residues 75–86 (SLEVQMHFYACL) lie on the Extracellular side of the membrane. Cys-85 and Cys-168 are disulfide-bonded. A helical membrane pass occupies residues 87–108 (FMSCVLLVFTHASIMSLLAIAV). Residues 109-128 (DRYLRVKLTVRYRTVTTQRR) lie on the Cytoplasmic side of the membrane. A helical transmembrane segment spans residues 129 to 150 (IWLFLGLCWLVSFLVGLTPMFG). The Extracellular segment spans residues 151-179 (WNRKVTLELSQNSSTLSCHFRSVVGLDYM). A helical transmembrane segment spans residues 180–200 (VFFSFITWILIPLVVMCIIYL). Over 201-233 (DIFYIIRNKLSQNLTGFRETRAFYGREFKTAKS) the chain is Cytoplasmic. Residues 234-257 (LFLVLFLFALCWLPLSIINFVSYF) traverse the membrane as a helical segment. At 258–263 (NVKIPE) the chain is on the extracellular side. A helical transmembrane segment spans residues 264–286 (IAMCLGILLSHANSMMNPIVYAC). The Cytoplasmic portion of the chain corresponds to 287–320 (KIKKFKETYFVILRACRLCQTSDSLDSNLEQTTE). The S-palmitoyl cysteine moiety is linked to residue Cys-305. 3 positions are modified to phosphothreonine: Thr-307, Thr-318, and Thr-319.

This sequence belongs to the G-protein coupled receptor 1 family. In terms of processing, phosphorylation on Thr-318 and Thr-319 may be crucial for rapid desensitization. Phosphorylation on Thr-318 may be necessary for phosphorylation on Thr-319 to occur. Testis, particularly in spermatocytes and spermatids but not in spermatogonia. Low levels in the brain.

Its subcellular location is the cell membrane. In terms of biological role, receptor for adenosine. The activity of this receptor is mediated by G proteins which inhibits adenylyl cyclase. May play a role during reproduction. This is Adenosine receptor A3 (Adora3) from Rattus norvegicus (Rat).